The sequence spans 264 residues: tRNA (guanine-N(1)-)-methyltransferase (264 aa).

Residues Gly-125 and 145 to 150 (LGDFVL) contribute to the S-adenosyl-L-methionine site.

This sequence belongs to the RNA methyltransferase TrmD family. As to quaternary structure, homodimer.

Its subcellular location is the cytoplasm. The enzyme catalyses guanosine(37) in tRNA + S-adenosyl-L-methionine = N(1)-methylguanosine(37) in tRNA + S-adenosyl-L-homocysteine + H(+). Functionally, specifically methylates guanosine-37 in various tRNAs. The protein is tRNA (guanine-N(1)-)-methyltransferase of Burkholderia cenocepacia (strain HI2424).